The following is a 195-amino-acid chain: HTH-type transcriptional regulator TtmR (195 aa).

The HTH marR-type domain occupies 47 to 177; it reads DSQLCFAVYA…LLDNLASMRD (131 aa). The H-T-H motif DNA-binding region spans 93–116; the sequence is VKEIGSRLFLDSGTLTPLLKRLEA.

Its subcellular location is the cytoplasm. Formaldehyde-responsive transcription factor that modulates resistance to stress induced by formaldehyde. Impacts the expression of a number of genes encoding transcription factors and/or involved in stress response, including efgA, and which probably collectively trigger a formaldehyde-specific physiological response. Required for optimal transition to methylotrophy. Not involved in a general stress response. The protein is HTH-type transcriptional regulator TtmR of Methylorubrum extorquens (strain PA1) (Methylobacterium extorquens).